The following is a 346-amino-acid chain: Cell division protein ZipA (346 aa).

Over methionine 1–leucine 6 the chain is Periplasmic. The chain crosses the membrane as a helical span at residues valine 7 to isoleucine 27. Residues arginine 28 to alanine 346 are Cytoplasmic-facing. Disordered regions lie at residues alanine 76–glutamate 103 and glutamine 121–proline 145.

It belongs to the ZipA family. In terms of assembly, interacts with FtsZ via their C-terminal domains.

Its subcellular location is the cell inner membrane. Functionally, essential cell division protein that stabilizes the FtsZ protofilaments by cross-linking them and that serves as a cytoplasmic membrane anchor for the Z ring. Also required for the recruitment to the septal ring of downstream cell division proteins. The protein is Cell division protein ZipA of Shewanella sp. (strain MR-7).